Here is a 559-residue protein sequence, read N- to C-terminus: Methionine--tRNA ligase (559 aa).

Positions 10–20 match the 'HIGH' region motif; the sequence is PYINAVPHLGT. Residues cysteine 141, cysteine 144, cysteine 154, and cysteine 157 each coordinate Zn(2+). A 'KMSKS' region motif is present at residues 331 to 335; the sequence is KFSKS. Position 334 (lysine 334) interacts with ATP.

This sequence belongs to the class-I aminoacyl-tRNA synthetase family. MetG type 1 subfamily. Zn(2+) is required as a cofactor.

The protein resides in the cytoplasm. The enzyme catalyses tRNA(Met) + L-methionine + ATP = L-methionyl-tRNA(Met) + AMP + diphosphate. Is required not only for elongation of protein synthesis but also for the initiation of all mRNA translation through initiator tRNA(fMet) aminoacylation. The polypeptide is Methionine--tRNA ligase (Korarchaeum cryptofilum (strain OPF8)).